The primary structure comprises 252 residues: Indole-3-glycerol phosphate synthase (252 aa).

This sequence belongs to the TrpC family.

The catalysed reaction is 1-(2-carboxyphenylamino)-1-deoxy-D-ribulose 5-phosphate + H(+) = (1S,2R)-1-C-(indol-3-yl)glycerol 3-phosphate + CO2 + H2O. Its pathway is amino-acid biosynthesis; L-tryptophan biosynthesis; L-tryptophan from chorismate: step 4/5. In Listeria monocytogenes serotype 4b (strain CLIP80459), this protein is Indole-3-glycerol phosphate synthase.